The chain runs to 128 residues: MSAATDQILEQLKSLSLLEASELVKQIEEAFGVSAAAPVGGMVMAAAAAAPAEAAEEKTEFDVILEEVPADKKIAVLKVVRTITGLGLKEAKELVESTPKAIKEATGKDDAEAIKKQIEEAGGKAAVK.

The protein belongs to the bacterial ribosomal protein bL12 family. Homodimer. Part of the ribosomal stalk of the 50S ribosomal subunit. Forms a multimeric L10(L12)X complex, where L10 forms an elongated spine to which 2 to 4 L12 dimers bind in a sequential fashion. Binds GTP-bound translation factors.

Its function is as follows. Forms part of the ribosomal stalk which helps the ribosome interact with GTP-bound translation factors. Is thus essential for accurate translation. This is Large ribosomal subunit protein bL12 from Synechocystis sp. (strain ATCC 27184 / PCC 6803 / Kazusa).